A 545-amino-acid polypeptide reads, in one-letter code: CTP synthase (545 aa).

An amidoligase domain region spans residues 1 to 266 (MKTNYIFVTG…DDYICKRFSL (266 aa)). A CTP-binding site is contributed by S14. A UTP-binding site is contributed by S14. Residues 15 to 20 (SLGKGI) and D72 contribute to the ATP site. Mg(2+) contacts are provided by D72 and E140. CTP-binding positions include 147–149 (DIE), 187–192 (KTKPTQ), and K223. Residues 187–192 (KTKPTQ) and K223 contribute to the UTP site. ATP is bound at residue 239 to 241 (KDV). In terms of domain architecture, Glutamine amidotransferase type-1 spans 291–542 (TIGMVGKYVE…VKAAFDYQKG (252 aa)). G352 is a binding site for L-glutamine. Catalysis depends on C379, which acts as the Nucleophile; for glutamine hydrolysis. L-glutamine is bound by residues 380-383 (LGMQ), E403, and R470. Residues H515 and E517 contribute to the active site.

It belongs to the CTP synthase family. Homotetramer.

It catalyses the reaction UTP + L-glutamine + ATP + H2O = CTP + L-glutamate + ADP + phosphate + 2 H(+). It carries out the reaction L-glutamine + H2O = L-glutamate + NH4(+). The enzyme catalyses UTP + NH4(+) + ATP = CTP + ADP + phosphate + 2 H(+). It participates in pyrimidine metabolism; CTP biosynthesis via de novo pathway; CTP from UDP: step 2/2. Its activity is regulated as follows. Allosterically activated by GTP, when glutamine is the substrate; GTP has no effect on the reaction when ammonia is the substrate. The allosteric effector GTP functions by stabilizing the protein conformation that binds the tetrahedral intermediate(s) formed during glutamine hydrolysis. Inhibited by the product CTP, via allosteric rather than competitive inhibition. Catalyzes the ATP-dependent amination of UTP to CTP with either L-glutamine or ammonia as the source of nitrogen. Regulates intracellular CTP levels through interactions with the four ribonucleotide triphosphates. The protein is CTP synthase of Proteus mirabilis (strain HI4320).